The following is a 499-amino-acid chain: Potassium voltage-gated channel subfamily A member 2 (499 aa).

A disordered region spans residues Met1–Pro27. A tetramerization domain region spans residues Met1 to Ile125. The Cytoplasmic segment spans residues Met1–Gly160. A helical transmembrane segment spans residues Pro161–Leu182. The Extracellular segment spans residues Glu183–Pro221. N-linked (GlcNAc...) asparagine glycosylation occurs at Asn207. Residues Phe222–Ala243 form a helical membrane-spanning segment. The S-palmitoyl cysteine moiety is linked to residue Cys244. Residues Cys244–Leu254 lie on the Cytoplasmic side of the membrane. Residues Met255–Ala275 traverse the membrane as a helical segment. Topologically, residues Glu276–Ser289 are extracellular. Residues Leu290 to His310 traverse the membrane as a helical; Voltage-sensor segment. Over Ser311–Met325 the chain is Cytoplasmic. Positions Lys312–Met325 are S4-S5 linker. Residues Arg326 to Phe347 form a helical membrane-spanning segment. Over Phe348–Ile361 the chain is Extracellular. Positions Pro362–Thr373 form an intramembrane region, helical. The short motif at Thr374 to Asp379 is the Selectivity filter element. An intramembrane segment occupies Thr374–Val381. The Extracellular segment spans residues Pro382–Lys388. The helical transmembrane segment at Ile389–Tyr417 threads the bilayer. Over His418–Val499 the chain is Cytoplasmic. The PDZ-binding motif lies at Thr497–Val499.

This sequence belongs to the potassium channel family. A (Shaker) (TC 1.A.1.2) subfamily. Kv1.2/KCNA2 sub-subfamily. As to quaternary structure, homotetramer and heterotetramer with other family members. In terms of tissue distribution, detected in tadpole brain and spinal cord.

The protein resides in the cell membrane. The catalysed reaction is K(+)(in) = K(+)(out). Its function is as follows. Voltage-gated potassium channel that mediates transmembrane potassium transport in excitable membranes, primarily in the brain and central nervous system. Prevents aberrant action potential firing and regulates neuronal output. Forms tetrameric potassium-selective channels through which potassium ions pass in accordance with their electrochemical gradient. The channel alternates between opened and closed conformations in response to the voltage difference across the membrane. Can form functional homotetrameric channels and heterotetrameric channels with other family members; the channels characteristics depend critically on the types of channel-forming alpha subunits that are present. Channel properties are modulated by cytoplasmic beta subunits that regulate the subcellular location of the alpha subunits. In vivo, membranes probably contain a mixture of heteromeric potassium channel complexes, making it difficult to assign currents observed in intact tissues to any particular potassium channel family member. Homotetrameric KCNA2 forms a delayed-rectifier potassium channel that opens in response to membrane depolarization, followed by slow spontaneous channel closure. Regulates neuronal excitability and plays a role as pacemaker in the regulation of neuronal action potentials. KCNA2-containing channels play a presynaptic role and prevent hyperexcitability and aberrant action potential firing. Response to toxins that are selective for KCNA2-containing potassium channels suggests that in Purkinje cells, dendritic subthreshold KCNA2-containing potassium channels prevent random spontaneous calcium spikes, suppressing dendritic hyperexcitability without hindering the generation of somatic action potentials, and thereby play an important role in motor coordination. Plays a role in the induction of long-term potentiation of neuron excitability in the CA3 layer of the hippocampus. This is Potassium voltage-gated channel subfamily A member 2 (kcna2) from Xenopus laevis (African clawed frog).